The sequence spans 300 residues: uncharacterized protein (300 aa).

One can recognise an HTH lysR-type domain in the interval 10 to 67 (FDLNLLVIFECIYQHLSISKAAESLYITPSAVSQSLQRLRAQFNDPLFIRSGKGIAPT). The H-T-H motif DNA-binding region spans 27–46 (ISKAAESLYITPSAVSQSLQ).

The protein belongs to the LysR transcriptional regulatory family.

This is an uncharacterized protein from Escherichia coli (strain K12).